The chain runs to 214 residues: Large ribosomal subunit protein uL3 (214 aa).

The interval 136-156 (THGNSLSHRAPGSIGQNQTPG) is disordered. Gln-153 carries the post-translational modification N5-methylglutamine.

This sequence belongs to the universal ribosomal protein uL3 family. Part of the 50S ribosomal subunit. Forms a cluster with proteins L14 and L19. In terms of processing, methylated by PrmB.

Its function is as follows. One of the primary rRNA binding proteins, it binds directly near the 3'-end of the 23S rRNA, where it nucleates assembly of the 50S subunit. This chain is Large ribosomal subunit protein uL3, found in Thioalkalivibrio sulfidiphilus (strain HL-EbGR7).